Consider the following 408-residue polypeptide: LL-diaminopimelate aminotransferase (408 aa).

2 residues coordinate substrate: tyrosine 15 and glycine 42. Pyridoxal 5'-phosphate is bound by residues tyrosine 72, 108–109, tyrosine 132, asparagine 187, tyrosine 218, and 246–248; these read SK and SFS. Substrate-binding residues include lysine 109, tyrosine 132, and asparagine 187. Residue lysine 249 is modified to N6-(pyridoxal phosphate)lysine. 2 residues coordinate pyridoxal 5'-phosphate: arginine 257 and asparagine 291. Residues asparagine 291 and arginine 387 each coordinate substrate.

Belongs to the class-I pyridoxal-phosphate-dependent aminotransferase family. LL-diaminopimelate aminotransferase subfamily. In terms of assembly, homodimer. Requires pyridoxal 5'-phosphate as cofactor.

It catalyses the reaction (2S,6S)-2,6-diaminopimelate + 2-oxoglutarate = (S)-2,3,4,5-tetrahydrodipicolinate + L-glutamate + H2O + H(+). It functions in the pathway amino-acid biosynthesis; L-lysine biosynthesis via DAP pathway; LL-2,6-diaminopimelate from (S)-tetrahydrodipicolinate (aminotransferase route): step 1/1. In terms of biological role, involved in the synthesis of meso-diaminopimelate (m-DAP or DL-DAP), required for both lysine and peptidoglycan biosynthesis. Catalyzes the direct conversion of tetrahydrodipicolinate to LL-diaminopimelate. The chain is LL-diaminopimelate aminotransferase from Prochlorococcus marinus (strain NATL2A).